Consider the following 278-residue polypeptide: NADPH-dependent 7-cyano-7-deazaguanine reductase (278 aa).

87-89 is a substrate binding site; it reads IES. 89–90 contributes to the NADPH binding site; sequence SK. Catalysis depends on cysteine 185, which acts as the Thioimide intermediate. The active-site Proton donor is aspartate 192. 224–225 contacts substrate; sequence HE. An NADPH-binding site is contributed by 253–254; the sequence is RG. Residues 255 to 278 form a disordered region; sequence GLDINPYRSTNPTFSVQNHRSFRQ. Residues 261 to 278 are compositionally biased toward polar residues; it reads YRSTNPTFSVQNHRSFRQ.

Belongs to the GTP cyclohydrolase I family. QueF type 2 subfamily. As to quaternary structure, homodimer.

The protein localises to the cytoplasm. It carries out the reaction 7-aminomethyl-7-carbaguanine + 2 NADP(+) = 7-cyano-7-deazaguanine + 2 NADPH + 3 H(+). Its pathway is tRNA modification; tRNA-queuosine biosynthesis. Its function is as follows. Catalyzes the NADPH-dependent reduction of 7-cyano-7-deazaguanine (preQ0) to 7-aminomethyl-7-deazaguanine (preQ1). The protein is NADPH-dependent 7-cyano-7-deazaguanine reductase of Coxiella burnetii (strain CbuG_Q212) (Coxiella burnetii (strain Q212)).